Consider the following 1020-residue polypeptide: MEDGHSKTVEQSLNFFGTDPERGLTLDQIKANQKKYGPNELPTEEGKSIWQLVLEQFDDLLVKILLLAAIISFVLALFEEHEETFTAFVEPLVILLILIANAVVGVWQERNAESAIEALKEYEPEMGKVVRQDKSGIQKVRAKEIVPGDLVEVSVGDKIPADIRITHIYSTTLRIDQSILTGESVSVIKHTDAIPDPRAVNQDKKNILFSGTNVAAGKARGVVIGTGLSTAIGKIRTEMSETEEIKTPLQQKLDEFGEQLSKVISVICVAVWAINIGHFNDPAHGGSWIKGAIYYFKIAVALAVAAIPEGLPAVITTCLALGTRRMAKKNAIVRSLPSVETLGCTSVICSDKTGTLTTNQMSVSRMFIFDKVEGNDSSFLEFEMTGSTYEPIGEVFLNGQRIKAADYDTLQELSTICIMCNDSAIDYNEFKQAFEKVGEATETALIVLAEKLNSFSVNKSGLDRRSAAIACRGEIETKWKKEFTLEFSRDRKSMSSYCTPLKASRLGTGPKLFVKGAPEGVLERCTHARVGTTKVPLTSALKAKILALTGQYGTGRDTLRCLALAVADSPMKPDEMDLGDSTKFYQYEVNLTFVGVVGMLDPPRKEVFDSIVRCRAAGIRVIVITGDNKATAEAICRRIGVFAEDEDTTGKSYSGREFDDLSPTEQKAAVARSRLFSRVEPQHKSKIVEFLQSMNEISAMTGDGVNDAPALKKAEIGIAMGSGTAVAKSAAEMVLADDNFSSIVSAVEEGRAIYNNMKQFIRYLISSNIGEVVSIFLTAALGLPEALIPVQLLWVNLVTDGLPATALGFNPPDLDIMEKPPRKADEGLISGWLFFRYMAIGFYVGAATVGAAAWWFVFSDEGPKLSYWQLTHHLSCLGGGDEFKGVDCKIFSDPHAMTMALSVLVTIEMLNAMNSLSENQSLITMPPWCNLWLIGSMALSFTLHFVILYVDVLSTVFQVTPLSAEEWITVMKFSIPVVLLDETLKFVARKIADGESPIYKMHGIVLMWAVFFGLLYAMML.

The Cytoplasmic portion of the chain corresponds to 1-48 (MEDGHSKTVEQSLNFFGTDPERGLTLDQIKANQKKYGPNELPTEEGKS). A helical membrane pass occupies residues 49-69 (IWQLVLEQFDDLLVKILLLAA). Topologically, residues 70–89 (IISFVLALFEEHEETFTAFV) are lumenal. Residues 90–110 (EPLVILLILIANAVVGVWQER) form a helical membrane-spanning segment. Residues 111–253 (NAESAIEALK…EIKTPLQQKL (143 aa)) lie on the Cytoplasmic side of the membrane. Serine 240 carries the post-translational modification Phosphoserine. The chain crosses the membrane as a helical span at residues 254 to 273 (DEFGEQLSKVISVICVAVWA). Topologically, residues 274–295 (INIGHFNDPAHGGSWIKGAIYY) are lumenal. The helical transmembrane segment at 296 to 313 (FKIAVALAVAAIPEGLPA) threads the bilayer. Valine 304, alanine 305, isoleucine 307, and glutamate 309 together coordinate Ca(2+). Over 314 to 757 (VITTCLALGT…EEGRAIYNNM (444 aa)) the chain is Cytoplasmic. The active-site 4-aspartylphosphate intermediate is aspartate 351. Mg(2+)-binding residues include aspartate 703 and aspartate 707. Residues 758–777 (KQFIRYLISSNIGEVVSIFL) form a helical membrane-spanning segment. Asparagine 768 and glutamate 771 together coordinate Ca(2+). Residues 778 to 787 (TAALGLPEAL) lie on the Lumenal side of the membrane. The chain crosses the membrane as a helical span at residues 788–808 (IPVQLLWVNLVTDGLPATALG). Asparagine 796, threonine 799, and aspartate 800 together coordinate Ca(2+). At 809–828 (FNPPDLDIMEKPPRKADEGL) the chain is on the cytoplasmic side. Residues 829–851 (ISGWLFFRYMAIGFYVGAATVGA) traverse the membrane as a helical segment. At 852–897 (AAWWFVFSDEGPKLSYWQLTHHLSCLGGGDEFKGVDCKIFSDPHAM) the chain is on the lumenal side. The helical transmembrane segment at 898 to 917 (TMALSVLVTIEMLNAMNSLS) threads the bilayer. A Ca(2+)-binding site is contributed by glutamate 908. Over 918–930 (ENQSLITMPPWCN) the chain is Cytoplasmic. Residues 931 to 949 (LWLIGSMALSFTLHFVILY) traverse the membrane as a helical segment. Residues 950–964 (VDVLSTVFQVTPLSA) lie on the Lumenal side of the membrane. Residues 965–985 (EEWITVMKFSIPVVLLDETLK) traverse the membrane as a helical segment. Residues 986-1020 (FVARKIADGESPIYKMHGIVLMWAVFFGLLYAMML) are Cytoplasmic-facing.

The protein belongs to the cation transport ATPase (P-type) (TC 3.A.3) family. In terms of assembly, interacts with SclA and SclB.

It localises to the endoplasmic reticulum membrane. Its subcellular location is the sarcoplasmic reticulum membrane. The enzyme catalyses Ca(2+)(in) + ATP + H2O = Ca(2+)(out) + ADP + phosphate + H(+). Its function is as follows. This magnesium-dependent enzyme catalyzes the hydrolysis of ATP coupled with the transport of calcium. In Drosophila melanogaster (Fruit fly), this protein is Calcium-transporting ATPase sarcoplasmic/endoplasmic reticulum type.